Consider the following 697-residue polypeptide: PAN2-PAN3 deadenylation complex subunit PAN3 (697 aa).

The C3H1-type zinc finger occupies 7–36 (TAKDTLCKNILIYGYCKYENKGCAFSHNRQ). The disordered stretch occupies residues 40–67 (QQQQATNTSNNSTSVITPNSANSTASSA). 2 consecutive short sequence motifs (PABPC-interacting motif-2 (PAM-2)) follow at residues 69–89 (LSSKKKFNLNTPSFQPSVSNL) and 106–126 (FKPENGVSEPDTVDSPTTQRP). Residues 106–240 (FKPENGVSEP…SAPTPGSETP (135 aa)) form a disordered region. The segment covering 119–153 (DSPTTQRPFTSKRFNVSTPSFTPTNFDFANNSNAD) has biased composition (polar residues). The segment covering 172 to 187 (QNQQQQQQQQQQQQKQ) has biased composition (low complexity). Residues 212-224 (GVSQSSPSTNPYF) show a composition bias toward polar residues. Positions 308-576 (QSLSHSNLPE…DLNEFSQRLT (269 aa)) are pseudokinase domain. ATP-binding positions include arginine 361, 416–423 (DYYPNSIS), and 470–471 (SK). The stretch at 577-615 (PKMFNIIDSLQNSSDFIEGQLTSELENARLFRLMTKLNY) forms a coiled coil. Residues 616-697 (LIHDNSNSEN…IDTKFRLMRE (82 aa)) form a knob domain region.

It belongs to the protein kinase superfamily. PAN3 family. As to quaternary structure, homodimer. Forms a heterotrimer with a catalytic subunit PAN2 to form the poly(A)-nuclease (PAN) deadenylation complex. Interacts (via PAM-2 motif) with poly(A)-binding protein PAB1 (via PABC domain), conferring substrate specificity of the enzyme complex.

Its subcellular location is the cytoplasm. In terms of biological role, regulatory subunit of the poly(A)-nuclease (PAN) deadenylation complex, one of two cytoplasmic mRNA deadenylases involved in mRNA turnover. PAN specifically shortens poly(A) tails of RNA and the activity is stimulated by poly(A)-binding protein PAB1. PAN deadenylation is followed by rapid degradation of the shortened mRNA tails by the CCR4-NOT complex. Deadenylated mRNAs are then degraded by two alternative mechanisms, namely exosome-mediated 3'-5' exonucleolytic degradation, or deadenylation-dependent mRNA decaping and subsequent 5'-3' exonucleolytic degradation by XRN1. May also be involved in post-transcriptional maturation of mRNA poly(A) tails. PAN3 acts as a positive regulator for PAN activity, recruiting the catalytic subunit PAN2 to mRNA via its interaction with RNA and with PAB1. This chain is PAN2-PAN3 deadenylation complex subunit PAN3, found in Candida albicans (strain SC5314 / ATCC MYA-2876) (Yeast).